A 572-amino-acid polypeptide reads, in one-letter code: Transducin-like enhancer protein 6 (572 aa).

3 disordered regions span residues 1–30 (MTSR…SSPT), 92–121 (QSEE…SSFE), and 174–236 (KAKP…VQEP). Residues 14 to 30 (KSTSPCPGISNSESSPT) are compositionally biased toward polar residues. WD repeat units lie at residues 284–322 (AHGE…AEDR), 332–372 (TPGA…LHVK), 377–416 (CAGL…VVRD), 419–456 (GYPD…KPLE), 458–497 (QFKS…RHMV), 499–538 (QKDS…KVFE), and 540–571 (PEMS…YQIT). Ser-510 carries the post-translational modification Phosphoserine; by PKA.

The protein belongs to the WD repeat Groucho/TLE family. As to quaternary structure, homodimers. Component of the subcortical maternal complex (SCMC), at least composed of NLRP5, KHDC3, OOEP, and TLE6. Within the complex, interacts with NLRP5, KHDC3 and OOEP. The SCMC may facilitate translocation of its components between the nuclear and cytoplasmic compartments. As part of the SCMC interacts with the SCMC-associated protein ZBED3. As part of the SCMC interacts with the SCMC-associated protein NLRP4F. As part of the SCMC interacts with the SCMC-associated protein CFL1/Cofilin-1. Interacts with FOXG1/BF-1; the interaction inhibits TLE1 interaction with FOXG1/BF-1. Interacts with NFATC1. Interacts with PAX6. In terms of assembly, component of the subcortical maternal complex (SCMC), at least composed of NLRP5, KHDC3L, OOEP, and TLE6 isoform 1. Within the complex, interacts with NLRP5, KHDC3L and OOEP. The SCMC may facilitate translocation of its components between the nuclear and cytoplasmic compartments.

Its subcellular location is the cytoplasm. The protein localises to the nucleus. In terms of biological role, component of the subcortical maternal complex (SCMC), a multiprotein complex that plays a key role in early embryonic development. The SCMC complex is a structural constituent of cytoplasmic lattices, which consist in fibrous structures found in the cytoplasm of oocytes and preimplantation embryos. They are required to store maternal proteins critical for embryonic development, such as proteins that control epigenetic reprogramming of the preimplantation embryo, and prevent their degradation or activation. Also required for spermatogenesis: regulates spermatogonia proliferation and cell cycle progression, potentially via regulation of cell cycle regulatory genes such as; CEBPB, CEBPA, CSF3, PCNA, and CDK4. Suppresses FOXG1/BF-1-mediated transcriptional repression by inhibiting interaction of the transcriptional corepressor TLE1 with FOXG1 which promotes cortical neuron differentiation. Acts as a transcriptional corepressor of NFATC1-mediated gene expression by contributing to PAX6-mediated repression. Functionally, component of the subcortical maternal complex (SCMC), a multiprotein complex that plays a key role in early embryonic development. The protein is Transducin-like enhancer protein 6 of Homo sapiens (Human).